We begin with the raw amino-acid sequence, 873 residues long: Leucine--tRNA ligase (873 aa).

Residues 47 to 57 (PYPSGKLHMGH) carry the 'HIGH' region motif. The 'KMSKS' region motif lies at 636–640 (KMSKS). Lysine 639 lines the ATP pocket.

It belongs to the class-I aminoacyl-tRNA synthetase family.

It localises to the cytoplasm. The enzyme catalyses tRNA(Leu) + L-leucine + ATP = L-leucyl-tRNA(Leu) + AMP + diphosphate. This Acinetobacter baylyi (strain ATCC 33305 / BD413 / ADP1) protein is Leucine--tRNA ligase.